The following is a 477-amino-acid chain: Bifunctional protein HldE (477 aa).

The interval 1-318 is ribokinase; sequence MKVNLPAFER…ENAVRGRAAT (318 aa). 195–198 provides a ligand contact to ATP; that stretch reads NLSE. The active site involves D264. The tract at residues 344 to 477 is cytidylyltransferase; the sequence is MTNGVFDILH…IKKIQTESEK (134 aa).

This sequence in the N-terminal section; belongs to the carbohydrate kinase PfkB family. The protein in the C-terminal section; belongs to the cytidylyltransferase family. As to quaternary structure, homodimer.

The enzyme catalyses D-glycero-beta-D-manno-heptose 7-phosphate + ATP = D-glycero-beta-D-manno-heptose 1,7-bisphosphate + ADP + H(+). It carries out the reaction D-glycero-beta-D-manno-heptose 1-phosphate + ATP + H(+) = ADP-D-glycero-beta-D-manno-heptose + diphosphate. The protein operates within nucleotide-sugar biosynthesis; ADP-L-glycero-beta-D-manno-heptose biosynthesis; ADP-L-glycero-beta-D-manno-heptose from D-glycero-beta-D-manno-heptose 7-phosphate: step 1/4. It participates in nucleotide-sugar biosynthesis; ADP-L-glycero-beta-D-manno-heptose biosynthesis; ADP-L-glycero-beta-D-manno-heptose from D-glycero-beta-D-manno-heptose 7-phosphate: step 3/4. Its function is as follows. Catalyzes the phosphorylation of D-glycero-D-manno-heptose 7-phosphate at the C-1 position to selectively form D-glycero-beta-D-manno-heptose-1,7-bisphosphate. Functionally, catalyzes the ADP transfer from ATP to D-glycero-beta-D-manno-heptose 1-phosphate, yielding ADP-D-glycero-beta-D-manno-heptose. The chain is Bifunctional protein HldE from Salmonella arizonae (strain ATCC BAA-731 / CDC346-86 / RSK2980).